A 177-amino-acid polypeptide reads, in one-letter code: Large ribosomal subunit protein uL6 (177 aa).

Belongs to the universal ribosomal protein uL6 family. Part of the 50S ribosomal subunit.

In terms of biological role, this protein binds to the 23S rRNA, and is important in its secondary structure. It is located near the subunit interface in the base of the L7/L12 stalk, and near the tRNA binding site of the peptidyltransferase center. This chain is Large ribosomal subunit protein uL6, found in Nitrosospira multiformis (strain ATCC 25196 / NCIMB 11849 / C 71).